The following is a 239-amino-acid chain: Probable septum site-determining protein MinC (239 aa).

This sequence belongs to the MinC family. As to quaternary structure, interacts with MinD and FtsZ.

Its function is as follows. Cell division inhibitor that blocks the formation of polar Z ring septums. Rapidly oscillates between the poles of the cell to destabilize FtsZ filaments that have formed before they mature into polar Z rings. Prevents FtsZ polymerization. This Colwellia psychrerythraea (strain 34H / ATCC BAA-681) (Vibrio psychroerythus) protein is Probable septum site-determining protein MinC.